The chain runs to 1171 residues: ATP-dependent helicase/deoxyribonuclease subunit B (1171 aa).

The region spanning 1-390 (MSLRFVIGRA…HPLVECIRSA (390 aa)) is the UvrD-like helicase ATP-binding domain. 8–15 (GRAGSGKS) is a binding site for ATP. The 307-residue stretch at 281–587 (MEQPRFHSPA…QFANIPPSLD (307 aa)) folds into the UvrD-like helicase C-terminal domain. Residues Cys805, Cys1129, Cys1132, and Cys1138 each contribute to the [4Fe-4S] cluster site.

The protein belongs to the helicase family. AddB/RexB type 1 subfamily. Heterodimer of AddA and AddB. Mg(2+) serves as cofactor. It depends on [4Fe-4S] cluster as a cofactor.

Functionally, the heterodimer acts as both an ATP-dependent DNA helicase and an ATP-dependent, dual-direction single-stranded exonuclease. Recognizes the chi site generating a DNA molecule suitable for the initiation of homologous recombination. The AddB subunit has 5' -&gt; 3' nuclease activity but not helicase activity. This is ATP-dependent helicase/deoxyribonuclease subunit B from Bacillus cereus (strain ZK / E33L).